The following is a 407-amino-acid chain: [Pyruvate dehydrogenase (acetyl-transferring)] kinase isozyme 2, mitochondrial (407 aa).

The Histidine kinase domain maps to 135-364 (LEYKDTYGDD…DAVIYLKALS (230 aa)). Tyrosine 215 and tyrosine 216 each carry phosphotyrosine. Residues 251–258 (ELFKNAMR), aspartate 290, 309–310 (ST), and 325–330 (GFGYGL) each bind ATP. Lysine 376 bears the N6-succinyllysine mark.

The protein belongs to the PDK/BCKDK protein kinase family. Homodimer, and heterodimer with PDK1. Interacts with the pyruvate dehydrogenase complex subunit DLAT, and is part of the multimeric pyruvate dehydrogenase complex that contains multiple copies of pyruvate dehydrogenase (E1), dihydrolipoamide acetyltransferase (DLAT, E2) and lipoamide dehydrogenase (DLD, E3). As to expression, expressed in many tissues, with the highest level in heart and skeletal muscle, intermediate levels in brain, kidney, pancreas and liver, and low levels in placenta and lung.

It is found in the mitochondrion matrix. The enzyme catalyses L-seryl-[pyruvate dehydrogenase E1 alpha subunit] + ATP = O-phospho-L-seryl-[pyruvate dehydrogenase E1 alpha subunit] + ADP + H(+). Its activity is regulated as follows. Activity is enhanced by binding to the pyruvate dehydrogenase subunit DLAT. Inhibited by ADP and pyruvate; these compounds interfere with DLAT binding and thereby inhibit kinase activity. Inhibited by dichloroacetate. Inhibited by AZD7545; this compound interferes with DLAT binding and thereby inhibits kinase activity. Functionally, kinase that plays a key role in the regulation of glucose and fatty acid metabolism and homeostasis via phosphorylation of the pyruvate dehydrogenase subunits PDHA1 and PDHA2. This inhibits pyruvate dehydrogenase activity, and thereby regulates metabolite flux through the tricarboxylic acid cycle, down-regulates aerobic respiration and inhibits the formation of acetyl-coenzyme A from pyruvate. Inhibition of pyruvate dehydrogenase decreases glucose utilization and increases fat metabolism. Mediates cellular responses to insulin. Plays an important role in maintaining normal blood glucose levels and in metabolic adaptation to nutrient availability. Via its regulation of pyruvate dehydrogenase activity, plays an important role in maintaining normal blood pH and in preventing the accumulation of ketone bodies under starvation. Plays a role in the regulation of cell proliferation and in resistance to apoptosis under oxidative stress. Plays a role in p53/TP53-mediated apoptosis. This chain is [Pyruvate dehydrogenase (acetyl-transferring)] kinase isozyme 2, mitochondrial (PDK2), found in Homo sapiens (Human).